The chain runs to 250 residues: UPF0758 protein tlr1707 (250 aa).

An MPN domain is found at threonine 116–leucine 239. Zn(2+)-binding residues include histidine 188, histidine 190, and aspartate 201. The JAMM motif motif lies at histidine 188–aspartate 201.

Belongs to the UPF0758 family.

This chain is UPF0758 protein tlr1707, found in Thermosynechococcus vestitus (strain NIES-2133 / IAM M-273 / BP-1).